Here is a 167-residue protein sequence, read N- to C-terminus: Small ribosomal subunit protein uS5 (167 aa).

Residues 11-74 enclose the S5 DRBM domain; it reads LQEKLIAVNR…EKARRNMINV (64 aa).

Belongs to the universal ribosomal protein uS5 family. Part of the 30S ribosomal subunit. Contacts proteins S4 and S8.

With S4 and S12 plays an important role in translational accuracy. In terms of biological role, located at the back of the 30S subunit body where it stabilizes the conformation of the head with respect to the body. The chain is Small ribosomal subunit protein uS5 from Klebsiella pneumoniae subsp. pneumoniae (strain ATCC 700721 / MGH 78578).